Consider the following 760-residue polypeptide: Catecholate siderophore receptor Fiu (760 aa).

The first 31 residues, 1-31 (MENNRNFPARQFHSLTFFAGLCIGITPVAQA), serve as a signal peptide directing secretion. The TBDR plug domain occupies 67–175 (PVADTTRTMT…PTGSINMISK (109 aa)). Residues 180 to 760 (DSGIDASASI…TFLLTANMHF (581 aa)) enclose the TBDR beta-barrel domain. The TonB C-terminal box motif lies at 743-760 (RYHPGEPRTFLLTANMHF).

It belongs to the TonB-dependent receptor family.

Its subcellular location is the cell outer membrane. In terms of biological role, involved in the active transport across the outer membrane of iron complexed with catecholate siderophores such as dihydroxybenzoylserine and dihydroxybenzoate. It derives its energy for transport by interacting with the trans-periplasmic membrane protein TonB. Can also transport catechol-substituted cephalosporins. Receptor for microcins M, H47 and E492. The sequence is that of Catecholate siderophore receptor Fiu (fiu) from Escherichia coli (strain UTI89 / UPEC).